The primary structure comprises 290 residues: PIH1 domain-containing protein 1 (290 aa).

A phosphoserine mark is found at S12, S16, and S173.

Belongs to the PIH1 family. As to quaternary structure, component of the R2TP complex composed at least of RUVBL1, RUVBL2, RPAP3 and PIHD1. Component of the PAQosome complex which is responsible for the biogenesis of several protein complexes and which consists of R2TP complex members RUVBL1, RUVBL2, RPAP3 and PIH1D1, URI complex members PFDN2, PFDN6, PDRG1, UXT and URI1 as well as ASDURF, POLR2E and DNAAF10/WDR92. Interacts with phosphorylated TELO2. Mediates interaction of TELO2 with the R2TP complex. Interacts with phosphorylated ECD, EFTUD2/SNRP116, RPB1 and UBR5 and with RPB1 in a phosphorylation-independent manner. Interacts with the core C/D box snoRNP particle components NOP58 and FBL and with RUVBL1/TIP49. Interacts with RPAP3 and DNAAF10. Interacts with histone H4 and with SWI/SNF complex member SMARCB1/SNF5. Interacts with the mTORC1 complex member RPTOR. Interacts with isoform 1 of MSL1.

It localises to the nucleus. In terms of biological role, involved in the assembly of C/D box small nucleolar ribonucleoprotein (snoRNP) particles. Recruits the SWI/SNF complex to the core promoter of rRNA genes and enhances pre-rRNA transcription. Mediates interaction of TELO2 with the R2TP complex which is necessary for the stability of MTOR and SMG1. Positively regulates the assembly and activity of the mTORC1 complex. The protein is PIH1 domain-containing protein 1 (Pih1d1) of Mus musculus (Mouse).